The following is a 389-amino-acid chain: MVTVEEVRKAQRAQGPATIMAIGTSTPQNCVDQSTYPDYYFRITNSEHLVELKEKFKRMCEKSMIKKRYMYLTEEILKENPNICAYMAPSLDARQDIVVVEVPKLGKEAAQKAIKEWGQPKSKITHLVFCTTSGVDMPGADYQLTKLLGLQPSVKRFMMYQQGCFAGGTVIRLAKDLAENNKGARVLVVCSEITAVTFRGPSDAHLDSLVGQALFGDGAAALIIGSDPDPDLERPLFQLVSAAQTILPDSGGAIDGHLREVGLTFHLLKDVPGLISKHIEKSLNEAFQPLGIHDWNSLFWIAHPGGPAILDQVEEKLELKPEKLRATRHVLSEYGNMSSACVLFILDEMRKASSKEGLNTTGEGLEWGVLFGFGPGLTVETVVLHSVSA.

Residue Cys-164 is part of the active site.

It belongs to the thiolase-like superfamily. Chalcone/stilbene synthases family.

It carries out the reaction (E)-4-coumaroyl-CoA + 3 malonyl-CoA + 3 H(+) = 2',4,4',6'-tetrahydroxychalcone + 3 CO2 + 4 CoA. Its pathway is secondary metabolite biosynthesis; flavonoid biosynthesis. Its function is as follows. The primary product of this enzyme is 4,2',4',6'-tetrahydroxychalcone (also termed naringenin-chalcone or chalcone) which can under specific conditions spontaneously isomerize into naringenin. This Ipomoea nil (Japanese morning glory) protein is Chalcone synthase E (CHSE).